We begin with the raw amino-acid sequence, 267 residues long: MPNGTKLAKSFLWKKCDSCNILISKFDFYKHDKVCPECNYHFPMYSSERINHIIDLKSWIPLYNNLLSGDPLGFCDKKPYITRLAENQKITGLDEAVQTGIGRINNISASVAVMDFNFMGGSMGSAVGEKITRLVEFSTKEELPIVIISASGGARMQEGILSLMQMAKISAALERLQSKGLLYISILSSPTTGGVFASFAMLGDIILAEPKAVVGFAGKRVVEQTLNEKLPPNFQSAEYLLDNGFVDLIVKRKQLKKTIHMILDLHN.

Residues 12-267 (LWKKCDSCNI…TIHMILDLHN (256 aa)) enclose the CoA carboxyltransferase N-terminal domain. Positions 16, 19, 35, and 38 each coordinate Zn(2+). A C4-type zinc finger spans residues 16 to 38 (CDSCNILISKFDFYKHDKVCPEC).

This sequence belongs to the AccD/PCCB family. In terms of assembly, acetyl-CoA carboxylase is a heterohexamer composed of biotin carboxyl carrier protein, biotin carboxylase and 2 subunits each of ACCase subunit alpha and ACCase plastid-coded subunit beta (accD). Requires Zn(2+) as cofactor.

The protein localises to the plastid. It localises to the chloroplast stroma. The enzyme catalyses N(6)-carboxybiotinyl-L-lysyl-[protein] + acetyl-CoA = N(6)-biotinyl-L-lysyl-[protein] + malonyl-CoA. It participates in lipid metabolism; malonyl-CoA biosynthesis; malonyl-CoA from acetyl-CoA: step 1/1. Component of the acetyl coenzyme A carboxylase (ACC) complex. Biotin carboxylase (BC) catalyzes the carboxylation of biotin on its carrier protein (BCCP) and then the CO(2) group is transferred by the transcarboxylase to acetyl-CoA to form malonyl-CoA. The chain is Acetyl-coenzyme A carboxylase carboxyl transferase subunit beta, chloroplastic from Cyanidium caldarium (Red alga).